The primary structure comprises 490 residues: Membrane-bound lytic murein transglycosylase F (490 aa).

The signal sequence occupies residues 1–32 (MFALTAYRLRCAAWLLATGIFLLLAGCSEAKA). Positions 33-269 (PTALERVQKE…RLKDRYYGHV (237 aa)) are non-LT domain. The segment at 270–490 (DVLGYVGAYT…PEEDSGDEKL (221 aa)) is LT domain. Glu-316 is an active-site residue. Positions 467–490 (AESGLHLPGVNKTRPEEDSGDEKL) are disordered. The segment covering 479-490 (TRPEEDSGDEKL) has biased composition (basic and acidic residues).

It in the N-terminal section; belongs to the bacterial solute-binding protein 3 family. The protein in the C-terminal section; belongs to the transglycosylase Slt family.

Its subcellular location is the cell outer membrane. The catalysed reaction is Exolytic cleavage of the (1-&gt;4)-beta-glycosidic linkage between N-acetylmuramic acid (MurNAc) and N-acetylglucosamine (GlcNAc) residues in peptidoglycan, from either the reducing or the non-reducing ends of the peptidoglycan chains, with concomitant formation of a 1,6-anhydrobond in the MurNAc residue.. In terms of biological role, murein-degrading enzyme that degrades murein glycan strands and insoluble, high-molecular weight murein sacculi, with the concomitant formation of a 1,6-anhydromuramoyl product. Lytic transglycosylases (LTs) play an integral role in the metabolism of the peptidoglycan (PG) sacculus. Their lytic action creates space within the PG sacculus to allow for its expansion as well as for the insertion of various structures such as secretion systems and flagella. The sequence is that of Membrane-bound lytic murein transglycosylase F from Pseudomonas aeruginosa (strain ATCC 15692 / DSM 22644 / CIP 104116 / JCM 14847 / LMG 12228 / 1C / PRS 101 / PAO1).